A 259-amino-acid chain; its full sequence is MRYALGIEYDGKNYCGWQRQNNVITVQEKLEKALSKIADEKIEVVCAGRTDTGVNATNQVIHFDTEKKRKDTAWTLGVNTHLPSDVAVAWVKKVDDDFHARFSATARNYRYIIYNKPLRSAILSHGISHCHFALDENLMQQGADYLLGKHDFTSFRTVHCQSHSAVRTIKHCRVTRQGDYLVVDIKANAFLHHMVRNVVGSLMRVGQSQETPHWMKEVLLAKNRCVAGVTAPPEGLYFVDVDYPENFELPKSRLGPLFL.

Asp-51 functions as the Nucleophile in the catalytic mechanism. Tyr-109 lines the substrate pocket.

This sequence belongs to the tRNA pseudouridine synthase TruA family. In terms of assembly, homodimer.

It carries out the reaction uridine(38/39/40) in tRNA = pseudouridine(38/39/40) in tRNA. Functionally, formation of pseudouridine at positions 38, 39 and 40 in the anticodon stem and loop of transfer RNAs. This Colwellia psychrerythraea (strain 34H / ATCC BAA-681) (Vibrio psychroerythus) protein is tRNA pseudouridine synthase A.